A 141-amino-acid chain; its full sequence is Sperm protein associated with the nucleus on the X chromosome N3 (141 aa).

Residues 1–10 (MEQPTSSTNG) show a composition bias toward polar residues. Disordered regions lie at residues 1–47 (MEQP…TKTS) and 66–141 (NQLE…SGED). Positions 11-26 (EKTKSPCESNNKKNDE) are enriched in basic and acidic residues. Residues 66-80 (NQLENEQSQENSINP) show a composition bias toward polar residues. Positions 84-103 (EEDEGVDLSEGSSNEDEDLG) are enriched in acidic residues. Positions 132-141 (EGSSQDSGED) are enriched in polar residues.

The protein belongs to the SPAN-X family.

The polypeptide is Sperm protein associated with the nucleus on the X chromosome N3 (SPANXN3) (Homo sapiens (Human)).